Here is a 313-residue protein sequence, read N- to C-terminus: Phosphoenolpyruvate phosphomutase (313 aa).

The Nucleophile role is filled by D69.

Belongs to the isocitrate lyase/PEP mutase superfamily. PEP mutase family.

It catalyses the reaction phosphoenolpyruvate + H(+) = 3-phosphonopyruvate. It functions in the pathway secondary metabolite biosynthesis; bialaphos biosynthesis. Functionally, formation of a carbon-phosphorus bond by converting phosphoenolpyruvate (PEP) to phosphonopyruvate (P-Pyr). This Streptomyces hygroscopicus protein is Phosphoenolpyruvate phosphomutase (bcpB).